Consider the following 266-residue polypeptide: Putative pyruvate, phosphate dikinase regulatory protein (266 aa).

149 to 156 (GVSRTSKT) serves as a coordination point for ADP.

Belongs to the pyruvate, phosphate/water dikinase regulatory protein family. PDRP subfamily.

The enzyme catalyses N(tele)-phospho-L-histidyl/L-threonyl-[pyruvate, phosphate dikinase] + ADP = N(tele)-phospho-L-histidyl/O-phospho-L-threonyl-[pyruvate, phosphate dikinase] + AMP + H(+). It carries out the reaction N(tele)-phospho-L-histidyl/O-phospho-L-threonyl-[pyruvate, phosphate dikinase] + phosphate + H(+) = N(tele)-phospho-L-histidyl/L-threonyl-[pyruvate, phosphate dikinase] + diphosphate. Its function is as follows. Bifunctional serine/threonine kinase and phosphorylase involved in the regulation of the pyruvate, phosphate dikinase (PPDK) by catalyzing its phosphorylation/dephosphorylation. The polypeptide is Putative pyruvate, phosphate dikinase regulatory protein (Halothermothrix orenii (strain H 168 / OCM 544 / DSM 9562)).